We begin with the raw amino-acid sequence, 948 residues long: UvrABC system protein A (948 aa).

Residue 33–40 (GLSGSGKS) coordinates ATP. The C4-type zinc-finger motif lies at 252-279 (CPICGFSIGELEPRMFSFNSPFGACPTC). ABC transporter domains follow at residues 309 to 587 (WIPT…KKSL) and 607 to 935 (ASDR…KYLK). 639-646 (GVSGSGKS) serves as a coordination point for ATP. Residues 738–764 (CEACKGDGIIKIEMHFLPDVYVPCEVC) form a C4-type zinc finger.

This sequence belongs to the ABC transporter superfamily. UvrA family. Forms a heterotetramer with UvrB during the search for lesions.

The protein resides in the cytoplasm. In terms of biological role, the UvrABC repair system catalyzes the recognition and processing of DNA lesions. UvrA is an ATPase and a DNA-binding protein. A damage recognition complex composed of 2 UvrA and 2 UvrB subunits scans DNA for abnormalities. When the presence of a lesion has been verified by UvrB, the UvrA molecules dissociate. The protein is UvrABC system protein A of Staphylococcus aureus (strain N315).